A 292-amino-acid chain; its full sequence is Protease HtpX (292 aa).

2 helical membrane passes run 4 to 24 (IVLFLLTNLAVMLIFSLILFL) and 32 to 52 (IYGLLIMSGLFGFSGSILSLI). H139 is a binding site for Zn(2+). E140 is a catalytic residue. Residue H143 coordinates Zn(2+). 2 helical membrane passes run 147-167 (GDMITMTLVQGVVNTFVIFIS) and 193-213 (FVYFLVSTFLELIFGILASII). E222 is a Zn(2+) binding site.

It belongs to the peptidase M48B family. Zn(2+) is required as a cofactor.

It localises to the cell membrane. The protein is Protease HtpX of Buchnera aphidicola subsp. Acyrthosiphon pisum (strain 5A).